We begin with the raw amino-acid sequence, 344 residues long: Ferrochelatase (344 aa).

2 residues coordinate Fe cation: His-214 and Glu-295.

The protein belongs to the ferrochelatase family.

It is found in the cytoplasm. The catalysed reaction is heme b + 2 H(+) = protoporphyrin IX + Fe(2+). Its pathway is porphyrin-containing compound metabolism; protoheme biosynthesis; protoheme from protoporphyrin-IX: step 1/1. Catalyzes the ferrous insertion into protoporphyrin IX. The protein is Ferrochelatase of Agrobacterium fabrum (strain C58 / ATCC 33970) (Agrobacterium tumefaciens (strain C58)).